Here is a 424-residue protein sequence, read N- to C-terminus: Enolase (424 aa).

(2R)-2-phosphoglycerate is bound at residue Gln163. Glu205 acts as the Proton donor in catalysis. Mg(2+) is bound by residues Asp242, Glu285, and Asp312. Positions 337, 366, 367, and 388 each coordinate (2R)-2-phosphoglycerate. The Proton acceptor role is filled by Lys337.

This sequence belongs to the enolase family. Requires Mg(2+) as cofactor.

The protein resides in the cytoplasm. It is found in the secreted. It localises to the cell surface. The enzyme catalyses (2R)-2-phosphoglycerate = phosphoenolpyruvate + H2O. The protein operates within carbohydrate degradation; glycolysis; pyruvate from D-glyceraldehyde 3-phosphate: step 4/5. Functionally, catalyzes the reversible conversion of 2-phosphoglycerate (2-PG) into phosphoenolpyruvate (PEP). It is essential for the degradation of carbohydrates via glycolysis. This chain is Enolase, found in Roseobacter denitrificans (strain ATCC 33942 / OCh 114) (Erythrobacter sp. (strain OCh 114)).